The following is a 341-amino-acid chain: Glycerol-3-phosphate dehydrogenase [NAD(P)+] (341 aa).

Positions 15, 16, 36, and 110 each coordinate NADPH. Sn-glycerol 3-phosphate is bound by residues K110, G139, and S141. A143 serves as a coordination point for NADPH. Residues K194, D247, S257, R258, and N259 each coordinate sn-glycerol 3-phosphate. The active-site Proton acceptor is the K194. R258 contacts NADPH. NADPH-binding residues include V282 and E284.

This sequence belongs to the NAD-dependent glycerol-3-phosphate dehydrogenase family.

The protein localises to the cytoplasm. It carries out the reaction sn-glycerol 3-phosphate + NAD(+) = dihydroxyacetone phosphate + NADH + H(+). The catalysed reaction is sn-glycerol 3-phosphate + NADP(+) = dihydroxyacetone phosphate + NADPH + H(+). Its pathway is membrane lipid metabolism; glycerophospholipid metabolism. In terms of biological role, catalyzes the reduction of the glycolytic intermediate dihydroxyacetone phosphate (DHAP) to sn-glycerol 3-phosphate (G3P), the key precursor for phospholipid synthesis. This Xanthomonas euvesicatoria pv. vesicatoria (strain 85-10) (Xanthomonas campestris pv. vesicatoria) protein is Glycerol-3-phosphate dehydrogenase [NAD(P)+].